Consider the following 357-residue polypeptide: Sorbitol dehydrogenase 2 (357 aa).

Position 43 (C43) interacts with Zn(2+). Y49 provides a ligand contact to substrate. 2 residues coordinate Zn(2+): H68 and E69. A substrate-binding site is contributed by E154. Residues D202, K207, 275–277 (VGM), and 299–301 (CFR) contribute to the NAD(+) site. Positions 301 and 302 each coordinate substrate.

The protein belongs to the zinc-containing alcohol dehydrogenase family. In terms of assembly, homotetramer. The cofactor is Zn(2+).

It catalyses the reaction keto-D-fructose + NADH + H(+) = D-sorbitol + NAD(+). It carries out the reaction xylitol + NAD(+) = D-xylulose + NADH + H(+). Functionally, polyol dehydrogenase that catalyzes the reversible NAD(+)-dependent oxidation of various sugar alcohols. Is active with D-sorbitol (D-glucitol) and xylitol as substrates, leading to the C2-oxidized product D-fructose and D-xylulose, respectively. The protein is Sorbitol dehydrogenase 2 (SOR2) of Saccharomyces cerevisiae (strain ATCC 204508 / S288c) (Baker's yeast).